Here is a 277-residue protein sequence, read N- to C-terminus: MEMO1 family protein TRQ2_0860 (277 aa).

Belongs to the MEMO1 family.

This Thermotoga sp. (strain RQ2) protein is MEMO1 family protein TRQ2_0860.